The sequence spans 265 residues: Small ribosomal subunit protein uS5 (265 aa).

Residues 1-15 show a composition bias toward low complexity; the sequence is MADTQPAQEAPAADA. Positions 1–44 are disordered; it reads MADTQPAQEAPAADAPRAERNFGRGRGGRGGRGRGRGGPGEEKE. Over residues 26–35 the composition is skewed to basic residues; it reads RGGRGGRGRG. The S5 DRBM domain occupies 88–151; the sequence is LHDEMMKIYP…IAAKLNIVPV (64 aa). The tract at residues 245–265 is disordered; that stretch reads TEPSRDPTDEHGELLAEMTTA. The span at 246–258 shows a compositional bias: basic and acidic residues; the sequence is EPSRDPTDEHGEL.

It belongs to the universal ribosomal protein uS5 family.

In terms of biological role, component of the ribosome, a large ribonucleoprotein complex responsible for the synthesis of proteins in the cell. The small ribosomal subunit (SSU) binds messenger RNAs (mRNAs) and translates the encoded message by selecting cognate aminoacyl-transfer RNA (tRNA) molecules. The large subunit (LSU) contains the ribosomal catalytic site termed the peptidyl transferase center (PTC), which catalyzes the formation of peptide bonds, thereby polymerizing the amino acids delivered by tRNAs into a polypeptide chain. The nascent polypeptides leave the ribosome through a tunnel in the LSU and interact with protein factors that function in enzymatic processing, targeting, and the membrane insertion of nascent chains at the exit of the ribosomal tunnel. Plays a role in the assembly and function of the 40S ribosomal subunit. Mutations in this protein affects the control of translational fidelity. Involved in nucleolar processing of pre-18S ribosomal RNA and ribosome assembly. The sequence is that of Small ribosomal subunit protein uS5 from Leishmania amazonensis.